The sequence spans 109 residues: UPF0060 membrane protein ABO_1373 (109 aa).

4 consecutive transmembrane segments (helical) span residues 1-21 (MLAL…IVGC), 33-53 (PGWV…LLSL), 63-83 (AAYG…VEGV), and 87-107 (PWDF…MFAP).

Belongs to the UPF0060 family.

It is found in the cell inner membrane. The chain is UPF0060 membrane protein ABO_1373 from Alcanivorax borkumensis (strain ATCC 700651 / DSM 11573 / NCIMB 13689 / SK2).